Consider the following 197-residue polypeptide: GTP cyclohydrolase-2 (197 aa).

50-54 provides a ligand contact to GTP; that stretch reads RIHSE. Residues Cys55, Cys66, and Cys68 each contribute to the Zn(2+) site. GTP is bound by residues Gln71, 93-95, and Thr115; that span reads EGR. The active-site Proton acceptor is Asp127. The active-site Nucleophile is Arg129. GTP contacts are provided by Thr150 and Lys155.

This sequence belongs to the GTP cyclohydrolase II family. Zn(2+) is required as a cofactor.

The enzyme catalyses GTP + 4 H2O = 2,5-diamino-6-hydroxy-4-(5-phosphoribosylamino)-pyrimidine + formate + 2 phosphate + 3 H(+). It participates in cofactor biosynthesis; riboflavin biosynthesis; 5-amino-6-(D-ribitylamino)uracil from GTP: step 1/4. In terms of biological role, catalyzes the conversion of GTP to 2,5-diamino-6-ribosylamino-4(3H)-pyrimidinone 5'-phosphate (DARP), formate and pyrophosphate. The sequence is that of GTP cyclohydrolase-2 from Neisseria gonorrhoeae (strain ATCC 700825 / FA 1090).